We begin with the raw amino-acid sequence, 502 residues long: MAWALKLPLADEVIESGLVQDFDASLSGIGQELGAGAYSMSDVLALPIFKQEESSLPPDNENEILPFQYVLCAATSPAVKLHDETLTYLNQGQSYEIRMLDNRKLGELPELNGKLVKSIFRVVFHDRRLQYTEHQQLEGWRWNRPGDRILDIDIPMSVGVIDPRANPTQLNTVEFLWDPSKRTSVFIQVHCISTEFTMRKHGGEKGVPFRVQIDTFKENGNGEYTEHLHSASCQIKVFKPKGADRKQKIDREKMEKRTPHEKEKYQPSYETTILTECSPWPEITYVNNSPSPGFNSSHSSFSLGEGNGSPNHQPEPPPPVTDNLLPTTTPQEAQQWLHRNRFSTFTRLFTNFSGADLLKLTRDDVIQICGPADGIRLFNALKGRMVRPRLTIYVCQESLQLREQQPQPQPQPQKQEDGDSNGTFFVYHAIYLEELTAVELTEKIAQLFSISPHQISQIYKQGPTGIHVVISDEMVQNFQEEACFILDTMEAETSDSYHVILK.

Residues 63-300 (EILPFQYVLC…SPGFNSSHSS (238 aa)) form the Grh/CP2 DB domain. The segment at 133-386 (EHQQLEGWRW…LFNALKGRMV (254 aa)) is DNA-binding. Residues 241–265 (KGADRKQKIDREKMEKRTPHEKEKY) are compositionally biased toward basic and acidic residues. Disordered stretches follow at residues 241–268 (KGAD…YQPS) and 294–326 (FNSS…NLLP). At S353 the chain carries Phosphoserine.

This sequence belongs to the grh/CP2 family. CP2 subfamily. In terms of assembly, binds to DNA as a dimer. Interacts with UBP1 and PIAS1, and is probably part of a complex containing TFCP2, UBP1 and PIAS1. Component of the SSP (stage selector protein) complex, which appears to be a heteromer of TFCP2 and 2 copies of NFE4.

It localises to the nucleus. Functionally, binds a variety of cellular promoters including fibrinogen, alpha-globin promoters. Activation of the alpha-globin promoter in erythroid cells is via synergistic interaction with UBP1. Functions as part of the SSP (stage selector protein) complex. Facilitates the interaction of the gamma-globin genes with enhancer elements contained in the locus control region in fetal erythroid cells. Interacts by binding to the stage selector element (SSE) in the proximal gamma-globin promoter. This Mus musculus (Mouse) protein is Alpha-globin transcription factor CP2 (Tfcp2).